The sequence spans 195 residues: Ephrin-A2 (195 aa).

The N-terminal stretch at 1-16 (MELSLVVFTVVCWVSV) is a signal peptide. Positions 24 to 157 (SDRHAVYWNS…KLKVYVKPTS (134 aa)) constitute an Ephrin RBD domain. Asn32 is a glycosylation site (N-linked (GlcNAc...) asparagine). Cystine bridges form between Cys57–Cys97 and Cys85–Cys146. Cys174 is lipidated: GPI-anchor amidated cysteine. Positions 175–195 (GADGPCLAVLMLLLVFLLAGV) are cleaved as a propeptide — removed in mature form.

The protein belongs to the ephrin family. In terms of assembly, binds to the receptor tyrosine kinases epha2, epha3, epha4 and epha5. Interacts with epha8; activates epha8. As to expression, widespread expression in the embryo.

Its subcellular location is the cell membrane. Its function is as follows. Cell surface GPI-bound ligand for Eph receptors, a family of receptor tyrosine kinases which are crucial for migration, repulsion and adhesion during neuronal, vascular and epithelial development. Binds promiscuously Eph receptors residing on adjacent cells, leading to contact-dependent bidirectional signaling into neighboring cells. The signaling pathway downstream of the receptor is referred to as forward signaling while the signaling pathway downstream of the ephrin ligand is referred to as reverse signaling. With the epha2 receptor may play a role in bone remodeling through regulation of osteoclastogenesis and osteoblastogenesis. In Danio rerio (Zebrafish), this protein is Ephrin-A2 (efna2).